Consider the following 441-residue polypeptide: uncharacterized protein (441 aa).

Residue 217-224 participates in ATP binding; that stretch reads GETGTGKT.

It belongs to the GSP E family.

This is an uncharacterized protein from Bacillus anthracis.